The following is an 831-amino-acid chain: Cadherin-related family member 5 (831 aa).

The N-terminal stretch at 1 to 28 (MGAPALLWPSLLLPWLTVLFGQPPGTLA) is a signal peptide. Topologically, residues 29 to 641 (QTQVCSVNQT…GQRFSTVDMA (613 aa)) are extracellular. Residues Asn36, Asn45, Asn84, Asn135, Asn143, Asn173, Asn201, Asn287, Asn311, Asn408, and Asn475 are each glycosylated (N-linked (GlcNAc...) asparagine). Cadherin domains follow at residues 53-125 (VNIF…DNAP), 128-240 (SFEI…TPWF), 252-357 (IHAQ…PLQF), and 358-459 (SQSL…ERER). A disordered region spans residues 452-632 (IQVSERERTP…STGAGEQGDG (181 aa)). Positions 473-491 (SSNTTMEAPLTSGTSQRPA) are enriched in polar residues. Residues 505 to 540 (GGTTLRPPTPASSIPGGSPTLGTSTSPQTTTPGGDS) show a composition bias toward low complexity. Polar residues predominate over residues 541–554 (AQTPKPGTSHPTAP). 2 tandem repeats follow at residues 541–571 (AQTPKPGTSHPTAPTSRTSTSLMTTSSRSDS) and 572–602 (TQTPKPGTSQPMVPIPGASTSSQPATPSGSS). The interval 541 to 614 (AQTPKPGTSH…TPKPGTSQST (74 aa)) is 3 X 31 AA approximate tandem repeats. Positions 555–572 (TSRTSTSLMTTSSRSDST) are enriched in low complexity. Composition is skewed to polar residues over residues 573-582 (QTPKPGTSQP) and 589-623 (ASTSSQPATPSGSSPQTPKPGTSQSTATGPISLPS). The stretch at 605 to 614 (TPKPGTSQST) is one 3; truncated repeat. A helical membrane pass occupies residues 642-662 (VLGGVLGALLLLALICLVILV). Residues 663–831 (HKHYRHRLAC…FGVDADNTYI (169 aa)) lie on the Cytoplasmic side of the membrane. The tract at residues 663–831 (HKHYRHRLAC…FGVDADNTYI (169 aa)) is mediates interaction with USH1C and MYO7B and is required for proper localization to microvilli tips and function in microvilli organization. Disordered stretches follow at residues 675–774 (GKAS…GGYK) and 793–831 (EPTADVDSASASGSEGSDDDDPDQKKTLRFGVDADNTYI). 3 positions are modified to phosphoserine: Ser699, Ser721, and Ser725. Residues 716–738 (PLRPPSPMSSSPTPPSSTPPSPQ) are compositionally biased toward pro residues. Thr728 bears the Phosphothreonine mark. A phosphoserine mark is found at Ser736 and Ser753. Over residues 761–771 (LTKERRPEGEG) the composition is skewed to basic and acidic residues. Residue Thr795 is modified to Phosphothreonine. Residues 797 to 807 (DVDSASASGSE) are compositionally biased toward low complexity. Phosphoserine is present on residues Ser802, Ser804, and Ser806.

In terms of assembly, part of the IMAC/intermicrovillar adhesion complex/intermicrovillar tip-link complex composed of ANKS4B, MYO7B, USH1C, CDHR2 and CDHR5. Interacts (via cytoplasmic domain) with USH1C and MYO7B; required for proper localization of CDHR5 to microvilli tips and its function in brush border differentiation. In terms of processing, N- and O-glycosylated.

The protein resides in the apical cell membrane. It is found in the cell projection. It localises to the microvillus membrane. Functionally, intermicrovillar adhesion molecule that forms, via its extracellular domain, calcium-dependent heterophilic complexes with CDHR2 on adjacent microvilli. Thereby, controls the packing of microvilli at the apical membrane of epithelial cells. Through its cytoplasmic domain, interacts with microvillus cytoplasmic proteins to form the intermicrovillar adhesion complex/IMAC. This complex plays a central role in microvilli and epithelial brush border differentiation. The chain is Cadherin-related family member 5 from Mus musculus (Mouse).